A 191-amino-acid chain; its full sequence is CASP-like protein 1D1 (191 aa).

Residues 1 to 22 (MTSTSKDTPESGYAVPPPNLFG) are Cytoplasmic-facing. A helical membrane pass occupies residues 23 to 43 (VDFGLRLLLLASAVSALVVLV). The Extracellular segment spans residues 44–73 (TSKQTESIPTSLPPPFPAFISRDAKFQHSP). Residues 74 to 94 (AFIYLLVALSVTCFYSIITMV) traverse the membrane as a helical segment. Topologically, residues 95-118 (ASFAAITSPSSSPRMLFHLVLSDA) are cytoplasmic. Residues 119-139 (VMAGVMASAAGTAGSVAYLGL) traverse the membrane as a helical segment. The Extracellular portion of the chain corresponds to 140 to 160 (KGNSHVNWNKVCNVYDKFCRH). Residues 161–181 (VGSSAAVSLVASVLLVSLVVL) traverse the membrane as a helical segment. Over 182-191 (SSYSLYRRCR) the chain is Cytoplasmic.

It belongs to the Casparian strip membrane proteins (CASP) family. As to quaternary structure, homodimer and heterodimers.

The protein localises to the cell membrane. The sequence is that of CASP-like protein 1D1 from Musa acuminata (Banana).